We begin with the raw amino-acid sequence, 197 residues long: MMHFRKKSSISNTSDHDGANRASDVKISEDDKARLKMRTASVADPILDAVQEAQPFEQAADTFHDNMNRQSYFSNEEGHVLCDVFGQPITQADISNPTRARDERPLDTIRSFEYAVSGDPVWAQQLETPTYGFRVRPDFPVFGAAVTYDANGMPQQVGGASSQMYGEQAVYQPQQHVQTEEKQKKKKKGLFGRMKKK.

The tract at residues 1–31 (MMHFRKKSSISNTSDHDGANRASDVKISEDD) is disordered. Phosphoserine is present on residues Ser-11 and Ser-23. The segment covering 14–31 (SDHDGANRASDVKISEDD) has biased composition (basic and acidic residues). Residues Lys-26 and Lys-32 each participate in a glycyl lysine isopeptide (Lys-Gly) (interchain with G-Cter in ubiquitin) cross-link. Positions 157–197 (VGGASSQMYGEQAVYQPQQHVQTEEKQKKKKKGLFGRMKKK) are disordered. The span at 158–177 (GGASSQMYGEQAVYQPQQHV) shows a compositional bias: polar residues. Over residues 184–197 (KKKKKGLFGRMKKK) the composition is skewed to basic residues.

It to yeast YGR273c.

This is an uncharacterized protein from Saccharomyces cerevisiae (strain ATCC 204508 / S288c) (Baker's yeast).